Reading from the N-terminus, the 102-residue chain is Complement inhibitor RaCI6 (102 aa).

The signal sequence occupies residues 1–24; it reads MAALNGLVLLLLTISAMFISECYS. Disulfide bonds link cysteine 37–cysteine 61 and cysteine 42–cysteine 63.

Belongs to the RaCI family. In terms of tissue distribution, expressed in salivary glands.

The protein resides in the secreted. Its function is as follows. Complement inhibitor. Prevents complement-mediated C5 activation by binding to C5. Binds C5 at a different binding site than the other tick complement inhibitors OmCI and CirpT1, and the drug eculizumab. In Dermacentor andersoni (Rocky mountain wood tick), this protein is Complement inhibitor RaCI6.